The following is a 341-amino-acid chain: tRNA N6-adenosine threonylcarbamoyltransferase (341 aa).

2 residues coordinate Fe cation: His117 and His121. Substrate contacts are provided by residues 139-143 (VVSGG), Asp172, Gly185, Asp189, and Asn278. A Fe cation-binding site is contributed by Asp307.

Belongs to the KAE1 / TsaD family. Fe(2+) serves as cofactor.

The protein localises to the cytoplasm. It carries out the reaction L-threonylcarbamoyladenylate + adenosine(37) in tRNA = N(6)-L-threonylcarbamoyladenosine(37) in tRNA + AMP + H(+). Required for the formation of a threonylcarbamoyl group on adenosine at position 37 (t(6)A37) in tRNAs that read codons beginning with adenine. Is involved in the transfer of the threonylcarbamoyl moiety of threonylcarbamoyl-AMP (TC-AMP) to the N6 group of A37, together with TsaE and TsaB. TsaD likely plays a direct catalytic role in this reaction. This Bacillus licheniformis (strain ATCC 14580 / DSM 13 / JCM 2505 / CCUG 7422 / NBRC 12200 / NCIMB 9375 / NCTC 10341 / NRRL NRS-1264 / Gibson 46) protein is tRNA N6-adenosine threonylcarbamoyltransferase.